Reading from the N-terminus, the 323-residue chain is Viral cathepsin (323 aa).

Positions 1–16 (MNKILFYLFVYGVVNS) are cleaved as a signal peptide. The propeptide at 17 to 112 (AAYDLLKAPN…IVLDQPPGKG (96 aa)) is activation peptide. Intrachain disulfides connect Cys133-Cys174, Cys167-Cys207, and Cys262-Cys310. Residue Cys136 is part of the active site. An N-linked (GlcNAc...) asparagine; by host glycan is attached at Asn158. Active-site residues include His269 and Asn289.

The protein belongs to the peptidase C1 family. In terms of processing, synthesized as an inactive proenzyme and activated by proteolytic removal of the inhibitory propeptide.

It catalyses the reaction Endopeptidase of broad specificity, hydrolyzing substrates of both cathepsin L and cathepsin B.. Cysteine protease that plays an essential role in host liquefaction to facilitate horizontal transmission of the virus. May participate in the degradation of foreign protein expressed by the baculovirus system. The polypeptide is Viral cathepsin (VCATH) (Helicoverpa zea (Corn earworm moth)).